A 294-amino-acid polypeptide reads, in one-letter code: Acetylglutamate kinase (294 aa).

Substrate-binding positions include 63–64 (GG), Arg85, and Asn188.

Belongs to the acetylglutamate kinase family. ArgB subfamily.

It localises to the cytoplasm. It catalyses the reaction N-acetyl-L-glutamate + ATP = N-acetyl-L-glutamyl 5-phosphate + ADP. Its pathway is amino-acid biosynthesis; L-arginine biosynthesis; N(2)-acetyl-L-ornithine from L-glutamate: step 2/4. Its function is as follows. Catalyzes the ATP-dependent phosphorylation of N-acetyl-L-glutamate. This Methanococcus maripaludis (strain C6 / ATCC BAA-1332) protein is Acetylglutamate kinase.